The primary structure comprises 75 residues: Exodeoxyribonuclease 7 small subunit (75 aa).

Belongs to the XseB family. As to quaternary structure, heterooligomer composed of large and small subunits.

The protein localises to the cytoplasm. It catalyses the reaction Exonucleolytic cleavage in either 5'- to 3'- or 3'- to 5'-direction to yield nucleoside 5'-phosphates.. In terms of biological role, bidirectionally degrades single-stranded DNA into large acid-insoluble oligonucleotides, which are then degraded further into small acid-soluble oligonucleotides. The protein is Exodeoxyribonuclease 7 small subunit of Clostridium perfringens (strain ATCC 13124 / DSM 756 / JCM 1290 / NCIMB 6125 / NCTC 8237 / Type A).